The chain runs to 418 residues: Hepatic and glial cell adhesion molecule (418 aa).

Positions 1 to 33 are cleaved as a signal peptide; it reads MKRERGALSRASRALRLSPFVYLLLIQPVPLEG. The Ig-like V-type domain occupies 34–142; that stretch reads VNITSPVRLI…GEKTINLTVD (109 aa). The Extracellular portion of the chain corresponds to 34 to 240; that stretch reads VNITSPVRLI…VKITVYRRSS (207 aa). Residues N35, N138, N167, and N189 are each glycosylated (N-linked (GlcNAc...) asparagine). Residues 148-234 form the Ig-like C2-type domain; that stretch reads PQVLVASTTV…QVRSLPVKIT (87 aa). A disulfide bridge links C168 with C217. Residues 241 to 261 traverse the membrane as a helical segment; the sequence is LYIILSTGGIFLLVTLVTVCA. The Cytoplasmic portion of the chain corresponds to 262–418; sequence CWKPSKKSRK…DESGQVEISA (157 aa). The disordered stretch occupies residues 271 to 418; the sequence is KKRKLEKQNS…DESGQVEISA (148 aa). A Phosphoserine modification is found at S280. The segment covering 287-308 has biased composition (basic and acidic residues); that stretch reads NDDRLKSEADTLPRSGEQERKN. Phosphoserine occurs at positions 321, 352, and 379. A compositionally biased stretch (low complexity) spans 341 to 358; it reads GYSVSPPVPGRSPGLPIR. Low complexity predominate over residues 385-396; sequence SSPGRSRSSSRS.

Homodimer. Dimer formation occurs predominantly through cis interactions on the cell surface. Part of a complex containing MLC1, TRPV4, AQP4 and ATP1B1. Interacts with CLCN2. N-glycosylated.

It is found in the cytoplasm. The protein resides in the cell membrane. Its function is as follows. Involved in regulating cell motility and cell-matrix interactions. May inhibit cell growth through suppression of cell proliferation. In glia, associates and targets CLCN2 at astrocytic processes and myelinated fiber tracts where it may regulate transcellular chloride flux involved in neuron excitability. The sequence is that of Hepatic and glial cell adhesion molecule from Mus musculus (Mouse).